An 89-amino-acid chain; its full sequence is MKNRSAIKRHNQSEVRRMRNRSAKSEVRTTARKYTEAVHAANAENAAALLRELSSQLDSAARKGILTKNSAARKKSRMQLLYNASFAAK.

Residues 1 to 10 (MKNRSAIKRH) are compositionally biased toward basic residues. The segment at 1-30 (MKNRSAIKRHNQSEVRRMRNRSAKSEVRTT) is disordered. Over residues 11–30 (NQSEVRRMRNRSAKSEVRTT) the composition is skewed to basic and acidic residues.

The protein belongs to the bacterial ribosomal protein bS20 family.

Functionally, binds directly to 16S ribosomal RNA. This Treponema denticola (strain ATCC 35405 / DSM 14222 / CIP 103919 / JCM 8153 / KCTC 15104) protein is Small ribosomal subunit protein bS20.